The sequence spans 183 residues: Apo-citrate lyase phosphoribosyl-dephospho-CoA transferase (183 aa).

The protein belongs to the CitX family.

The catalysed reaction is apo-[citrate lyase ACP] + 2'-(5''-triphospho-alpha-D-ribosyl)-3'-dephospho-CoA = holo-[citrate lyase ACP] + diphosphate. Its function is as follows. Transfers 2-(5''-triphosphoribosyl)-3'-dephosphocoenzyme-A on a serine residue to the apo-acyl carrier protein (gamma chain) of the citrate lyase to yield holo-acyl carrier protein. The polypeptide is Apo-citrate lyase phosphoribosyl-dephospho-CoA transferase (Citrobacter koseri (strain ATCC BAA-895 / CDC 4225-83 / SGSC4696)).